Reading from the N-terminus, the 601-residue chain is Sulfite reductase [NADPH] flavoprotein alpha-component (601 aa).

The Flavodoxin-like domain maps to 64-202 (ITLISASQTG…AAQEWRARVV (139 aa)). FMN-binding positions include 70–75 (SQTGNA), 117–120 (STQG), and 153–162 (LGDTSYEFFC). The region spanning 236 to 450 (EAPLSASLAV…IEHNDNFRLP (215 aa)) is the FAD-binding FR-type domain. Residues Thr-324, Ala-358, 388–391 (RLYS), 406–408 (TVG), Tyr-412, and 421–424 (GGAS) each bind FAD. NADP(+)-binding positions include 521-522 (SR), 527-531 (KIYVQ), and Asp-563. Tyr-601 serves as a coordination point for FAD.

Belongs to the NADPH-dependent sulphite reductase flavoprotein subunit CysJ family. The protein in the N-terminal section; belongs to the flavodoxin family. It in the C-terminal section; belongs to the flavoprotein pyridine nucleotide cytochrome reductase family. As to quaternary structure, alpha(8)-beta(8). The alpha component is a flavoprotein, the beta component is a hemoprotein. Requires FAD as cofactor. FMN serves as cofactor.

The enzyme catalyses hydrogen sulfide + 3 NADP(+) + 3 H2O = sulfite + 3 NADPH + 4 H(+). It functions in the pathway sulfur metabolism; hydrogen sulfide biosynthesis; hydrogen sulfide from sulfite (NADPH route): step 1/1. In terms of biological role, component of the sulfite reductase complex that catalyzes the 6-electron reduction of sulfite to sulfide. This is one of several activities required for the biosynthesis of L-cysteine from sulfate. The flavoprotein component catalyzes the electron flow from NADPH -&gt; FAD -&gt; FMN to the hemoprotein component. In Citrobacter koseri (strain ATCC BAA-895 / CDC 4225-83 / SGSC4696), this protein is Sulfite reductase [NADPH] flavoprotein alpha-component.